We begin with the raw amino-acid sequence, 174 residues long: Inactive signal peptidase IA (174 aa).

At 1–7 (MKKVVKY) the chain is on the cytoplasmic side. Residues 8 to 28 (LISLILAIIIVLFVQTFVIVG) traverse the membrane as a helical segment. Residues 29 to 174 (HVIPNNDMSP…FSKWTIQFKS (146 aa)) are Extracellular-facing.

The protein belongs to the peptidase S26 family.

The protein resides in the cell membrane. In terms of biological role, catalytically inactive. This is Inactive signal peptidase IA (spsA) from Staphylococcus aureus (strain MRSA252).